The chain runs to 297 residues: Ribosomal RNA small subunit methyltransferase H (297 aa).

Residues 35-37, Asp-55, Phe-82, Asp-100, and Gln-107 each bind S-adenosyl-L-methionine; that span reads GGH.

Belongs to the methyltransferase superfamily. RsmH family.

The protein resides in the cytoplasm. It carries out the reaction cytidine(1402) in 16S rRNA + S-adenosyl-L-methionine = N(4)-methylcytidine(1402) in 16S rRNA + S-adenosyl-L-homocysteine + H(+). Functionally, specifically methylates the N4 position of cytidine in position 1402 (C1402) of 16S rRNA. This Chlamydia caviae (strain ATCC VR-813 / DSM 19441 / 03DC25 / GPIC) (Chlamydophila caviae) protein is Ribosomal RNA small subunit methyltransferase H.